The sequence spans 184 residues: Phosphonoformate cytidylyltransferase (184 aa).

The enzyme catalyses phosphonoformate + CTP = CMP-5'-phosphonoformate + diphosphate. Its pathway is secondary metabolite biosynthesis; bialaphos biosynthesis. In terms of biological role, catalyzes the displacement of the beta- and gamma-phosphates of CTP by phosphonoformate to produce CMP-5'-phosphonoformate, an intermediate in the biosynthesis of phosphinothricin tripeptide (PTT), also known as bialaphos (BA), a natural-product antibiotic and potent herbicide. The chain is Phosphonoformate cytidylyltransferase from Streptomyces viridochromogenes (strain DSM 40736 / JCM 4977 / BCRC 1201 / Tue 494).